The primary structure comprises 509 residues: Ribonuclease Y (509 aa).

A helical membrane pass occupies residues 5–25; that stretch reads IIILLSVFCGIFFICFIICSS. The KH domain maps to 199-259; the sequence is TTNIVKLPSD…IRREIATRTL (61 aa). The HD domain maps to 325–418; that stretch reads VLAHSIEVAK…VAIADSISAS (94 aa).

Belongs to the RNase Y family.

It is found in the cell membrane. Endoribonuclease that initiates mRNA decay. The chain is Ribonuclease Y from Mycoplasma mycoides subsp. mycoides SC (strain CCUG 32753 / NCTC 10114 / PG1).